The sequence spans 215 residues: Sodium channel regulatory subunit beta-3 (215 aa).

The first 24 residues, 1-24 (MPAFNRLLPLASLVLIYWVRVCFP), serve as a signal peptide directing secretion. The 114-residue stretch at 25–138 (VCVEVPSETE…EAHRPFVKTT (114 aa)) folds into the Ig-like C2-type domain. Residues 25 to 156 (VCVEVPSETE…EEAGEDFTSV (132 aa)) are Extracellular-facing. Disulfide bonds link Cys-26–Cys-48 and Cys-45–Cys-120. 4 N-linked (GlcNAc...) asparagine glycosylation sites follow: Asn-95, Asn-109, Asn-113, and Asn-121. The helical transmembrane segment at 157–178 (VSEIMMYILLVFLTLWLFIEMI) threads the bilayer. The Cytoplasmic portion of the chain corresponds to 179 to 215 (YCYRKVSKAEEAAQENASDYLAIPSENKENSVVPVEE).

This sequence belongs to the sodium channel auxiliary subunit SCN3B (TC 8.A.17) family. A voltage-gated sodium (Nav) channel consists of an ion-conducting pore-forming alpha subunit functional on its own that is regulated by one or more beta subunits. Forms homodimers and homotrimers. SCN3B is non-covalently associated with alpha subunits and induces the formation of alpha subunit oligomers, including trimers. Interacts with SCN5A/Nav1.5; regulatory subunit of SCN5A/Nav1.5. Interacts with SCN7A/Nav2.1; probable regulatory subunit of SCN7A/Nav2.1. Interacts with SCN10A; regulatory subunit of SCN10A/Nav1.8. Interacts with NFASC; probably involved in targeting the sodium channels to the nodes of Ranvier. Post-translationally, intramolecular disulfide bonds favor the voltage-gated sodium channel oligomeric complex assembly. In terms of processing, N-glycosylated. As to expression, expressed broadly in neurons in the central and peripheral nervous systems, but not in glia and most non-neuronal cells. Weak detection in lung and adrenal gland.

Its subcellular location is the cell membrane. In terms of biological role, regulatory subunit of multiple voltage-gated sodium (Nav) channels directly mediating the depolarization of excitable membranes. Navs, also called VGSCs (voltage-gated sodium channels) or VDSCs (voltage-dependent sodium channels), operate by switching between closed and open conformations depending on the voltage difference across the membrane. In the open conformation they allow Na(+) ions to selectively pass through the pore, along their electrochemical gradient. The influx of Na+ ions provokes membrane depolarization, initiating the propagation of electrical signals throughout cells and tissues. The accessory beta subunits participate in localization and functional modulation of the Nav channels. Voltage-gated sodium channels regulatory subunit that modulates channel gating kinetics. Modulates the activity of SCN2A/Nav1.2, causing a hyperpolarizing shift in the voltage-dependence of inactivation and increasing the fraction of channels operating in the fast gating mode. Also able to induce unique persistent SCN2A/Nav1.2-mediated sodium currents. Could modulate the activity of SCN10A/Nav1.8. This Rattus norvegicus (Rat) protein is Sodium channel regulatory subunit beta-3.